Reading from the N-terminus, the 2090-residue chain is Non-reducing polyketide synthase rdc1 (2090 aa).

Positions 12-250 (FLVGDQVDSW…NPLNIHALQH (239 aa)) are N-terminal acylcarrier protein transacylase (SAT) domain. The Ketosynthase family 3 (KS3) domain maps to 375 to 808 (TGRIAIVGMS…GGNACLLLED (434 aa)). Residues Cys551, His686, and His726 each act as for beta-ketoacyl synthase activity in the active site. A malonyl-CoA:ACP transacylase (MAT) domain region spans residues 912-1195 (IFVFSGQGSH…NQVCTQFVRA (284 aa)). The active-site For acyl/malonyl transferase activity is Ser1003. Residues 1293–1433 (QHVAKESSSN…LVVQKNVKAL (141 aa)) form an N-terminal hotdog fold region. The PKS/mFAS DH domain maps to 1293–1607 (QHVAKESSSN…FVRISNALLQ (315 aa)). The product template (PT) domain stretch occupies residues 1304 to 1604 (GKLEITFRAS…NLSFVRISNA (301 aa)). Residues 1459-1607 (QGHWLKHDIF…FVRISNALLQ (149 aa)) are C-terminal hotdog fold. The segment at 1615-1650 (SKPVGRGMAKQEKQEVPATTEVVRQPEKEESRHSVD) is disordered. Over residues 1638-1649 (RQPEKEESRHSV) the composition is skewed to basic and acidic residues. The Carrier domain occupies 1649-1726 (VDTPSFSDVL…DIKRAFDILT (78 aa)). O-(pantetheine 4'-phosphoryl)serine is present on Ser1686. Residues 1820–1964 (ADGTGSIATY…THQHLKALFA (145 aa)) form a thioesterase (TE) domain region.

It functions in the pathway secondary metabolite biosynthesis. In terms of biological role, non-reducing polyketide synthase; part of the gene cluster that mediates the biosynthesis of radicicol, a resorcylic acid lactone (RAL) that irreversibly inhibits the HSP90 molecular chaperone, an important target for cancer chemotherapy. The radicicol cluster encodes only two apparent post-PKS enzymes, a cytochrome P450 monooxygenase (rdc4) and a non-heme halogenase (rdc2) that could introduce the epoxide and the chlorine, respectively. If this cluster includes all the genes required for radicicol biosynthesis, the remaining structural features of radicicol are presumably generated by the PKSs rdc1 and rdc5. The C-2' ketone could arise if the R-PKS rdc5 and NR-PKS rdc1 each carry out four iterations, in contrast to the five iteration-three iteration split for the hypothemycin PKSs. The origin of the cis 5',6' double bond is not known. The radicicol R-PKS rdc5 ER domain may catalyze either double bond isomerization or reduction in the third iteration. The chain is Non-reducing polyketide synthase rdc1 from Metacordyceps chlamydosporia (Nematophagous fungus).